We begin with the raw amino-acid sequence, 263 residues long: Eukaryotic translation initiation factor 3 subunit J-B (263 aa).

Acidic residues-rich tracts occupy residues 1–13 and 30–50; these read MADS…DNFE and EGED…EEKE. 2 disordered regions span residues 1–75 and 214–235; these read MADS…DKIK and KQKQ…VPGG. Positions 30 to 127 form a coiled coil; that stretch reads EGEDEEEDVK…EADMELAREA (98 aa). Over residues 51–75 the composition is skewed to basic and acidic residues; the sequence is EEKKVEQKIAEVKPPEKKKLSDKIK.

Belongs to the eIF-3 subunit J family. Component of the eukaryotic translation initiation factor 3 (eIF-3) complex, which is composed of 13 subunits: eif3a, eif3b, eif3c, eif3d, eif3e, eif3f, eif3g, eif3h, eif3i, eif3j, eif3k, eif3l and eif3m.

The protein resides in the cytoplasm. Its function is as follows. Component of the eukaryotic translation initiation factor 3 (eIF-3) complex, which is involved in protein synthesis of a specialized repertoire of mRNAs and, together with other initiation factors, stimulates binding of mRNA and methionyl-tRNAi to the 40S ribosome. The eIF-3 complex specifically targets and initiates translation of a subset of mRNAs involved in cell proliferation. In Danio rerio (Zebrafish), this protein is Eukaryotic translation initiation factor 3 subunit J-B (eif3jb).